We begin with the raw amino-acid sequence, 283 residues long: Ribosomal RNA small subunit methyltransferase A (283 aa).

S-adenosyl-L-methionine contacts are provided by Asn22, Leu24, Gly49, Glu70, and Asn113.

This sequence belongs to the class I-like SAM-binding methyltransferase superfamily. rRNA adenine N(6)-methyltransferase family. RsmA subfamily.

The protein localises to the cytoplasm. It catalyses the reaction adenosine(1518)/adenosine(1519) in 16S rRNA + 4 S-adenosyl-L-methionine = N(6)-dimethyladenosine(1518)/N(6)-dimethyladenosine(1519) in 16S rRNA + 4 S-adenosyl-L-homocysteine + 4 H(+). Its function is as follows. Specifically dimethylates two adjacent adenosines (A1518 and A1519) in the loop of a conserved hairpin near the 3'-end of 16S rRNA in the 30S particle. May play a critical role in biogenesis of 30S subunits. This chain is Ribosomal RNA small subunit methyltransferase A, found in Myxococcus xanthus (strain DK1622).